Here is a 616-residue protein sequence, read N- to C-terminus: Dihydroxy-acid dehydratase (616 aa).

Residue Asp81 coordinates Mg(2+). Cys122 contributes to the [2Fe-2S] cluster binding site. Asp123 and Lys124 together coordinate Mg(2+). Lys124 carries the N6-carboxylysine modification. [2Fe-2S] cluster is bound at residue Cys195. Glu491 is a Mg(2+) binding site. The active-site Proton acceptor is Ser517.

The protein belongs to the IlvD/Edd family. As to quaternary structure, homodimer. [2Fe-2S] cluster serves as cofactor. The cofactor is Mg(2+).

It carries out the reaction (2R)-2,3-dihydroxy-3-methylbutanoate = 3-methyl-2-oxobutanoate + H2O. The catalysed reaction is (2R,3R)-2,3-dihydroxy-3-methylpentanoate = (S)-3-methyl-2-oxopentanoate + H2O. The protein operates within amino-acid biosynthesis; L-isoleucine biosynthesis; L-isoleucine from 2-oxobutanoate: step 3/4. It participates in amino-acid biosynthesis; L-valine biosynthesis; L-valine from pyruvate: step 3/4. Functions in the biosynthesis of branched-chain amino acids. Catalyzes the dehydration of (2R,3R)-2,3-dihydroxy-3-methylpentanoate (2,3-dihydroxy-3-methylvalerate) into 2-oxo-3-methylpentanoate (2-oxo-3-methylvalerate) and of (2R)-2,3-dihydroxy-3-methylbutanoate (2,3-dihydroxyisovalerate) into 2-oxo-3-methylbutanoate (2-oxoisovalerate), the penultimate precursor to L-isoleucine and L-valine, respectively. The chain is Dihydroxy-acid dehydratase from Yersinia pseudotuberculosis serotype I (strain IP32953).